A 40-amino-acid chain; its full sequence is Natriuretic peptide TNPd (40 aa).

Cysteines 9 and 25 form a disulfide.

Belongs to the natriuretic peptide family. In terms of tissue distribution, expressed by the venom gland.

The protein resides in the secreted. Functionally, snake venom natriuretic peptide that exhibits vasoactive and hypotensive activity. Stimulates cGMP production through the natriuretic peptide receptor 1 (NPR1) with very high potencies for the rat NPR1 (EC(50)=18 nM), and very weak potencies over human NPR1 (30% activation at 10 uM). In Oxyuranus microlepidotus (Inland taipan), this protein is Natriuretic peptide TNPd.